Here is a 987-residue protein sequence, read N- to C-terminus: MSSYRLPKRGLVDRNVPLSFTFDGRPMQGLEGDTLASALLANGRMLVGRSFKYHRPRGILTAGAAEPNALVTVGRGGRAEPNTRATMQELYEGLEARSQNRWPSLAFDIGALNGLLSPFLGAGFYYKTFMWPAPLWEKLYEPVIRRAAGLGKASYEADPDAYEKSWAHCDLLVIGAGPTGLAAALTAGRAGARVILVDEGSLPGGSLLSDTATIDGKAAADFARDTSDELRSMPNVQVLVRTTAFGWYDGNVFGAVERVQKHVREPASHLPVERLWRIVAGKALLATGAEERPLVFGGNDRPGVMMAGAMRAYLNRYGVAPGRTPAIFTTNDTGYTLAQELEAAGVDVVAIVDSRPAAGVDYRGKARLVREAVVCGTKGGKAISAIEVHHGGRTETIAVDALAMAGGFDPIIHLACHRGGKPVWSAEKAAFLAPGSLKGLEVAGGAAATTGLAACLGEGAARAEAIVRELGLPCPPVAVVKVESEEGIRSPAPLWSIPGIKDKAFVDFQNDVHLKDIGLAVREGYSHVELAKRYTTSGMATDQGKLSNVNAIGLIAKARGVSPAEVGTTTFRPFYTPVSFGALTGAHTGHHFQPVRKSPLHDWAKKHGAVFVETGLWYRSSWFPRSGERTWRESVEREVLNVRKNAGLCDVSMLGKIEITGSDAAEFLNRVYCNAFLKLPVGKARYGLMLREDGFIYDDGTTSRLEENRFFMTTTTAYAAGVMNHLEFCAQVLWPQLDVRLASITDQWAQMAIAGPKARMILQKIVDEDISDAAFPFLAAKEVSLFGGALHGCLFRISFSGELAYELAVPAGYGESIADALLEAGKDHGIMPYGVETLSVLRIEKGHVTHNEINGTIVPADLGFGKMVSAGKPDFVGKAMLQREGLTAPDRPQLVGVVPLDPQQSFRSGSHILAKGAAATLENDEGYVTSSAYSPHVGSTIALALVRNGRNRHGEEVLVWSGLHGESTPARLCNPVFFDPQNERLHV.

Positions 198, 199, 206, 244, and 445 each coordinate NAD(+). (6R)-5,10-methylene-5,6,7,8-tetrahydrofolate is bound by residues T714 and E806.

This sequence belongs to the GcvT family. Heterotetramer composed of subunits alpha (SoxA), beta (SoxB), gamma (SoxG) and delta (SoxD). It depends on NAD(+) as a cofactor.

Its subcellular location is the cytoplasm. It catalyses the reaction sarcosine + (6S)-5,6,7,8-tetrahydrofolate + O2 = (6R)-5,10-methylene-5,6,7,8-tetrahydrofolate + glycine + H2O2. The catalysed reaction is sarcosine + O2 + H2O = formaldehyde + glycine + H2O2. Functionally, in the presence of tetrahydrofolate, catalyzes the oxidative demethylation of sarcosine to yield glycine, 5,10-methylenetetrahydrofolate and hydrogen peroxide. In the absence of tetrahydrofolate, catalyzes the oxidative demethylation of sarcosine to yield glycine, formaldehyde and hydrogen peroxide. The protein is Sarcosine oxidase subunit alpha (soxA) of Rhizobium meliloti (strain 1021) (Ensifer meliloti).